A 228-amino-acid polypeptide reads, in one-letter code: Uracil-DNA glycosylase (228 aa).

The active-site Proton acceptor is aspartate 65.

It belongs to the uracil-DNA glycosylase (UDG) superfamily. UNG family.

It is found in the cytoplasm. It carries out the reaction Hydrolyzes single-stranded DNA or mismatched double-stranded DNA and polynucleotides, releasing free uracil.. Excises uracil residues from the DNA which can arise as a result of misincorporation of dUMP residues by DNA polymerase or due to deamination of cytosine. This Lacticaseibacillus paracasei (strain ATCC 334 / BCRC 17002 / CCUG 31169 / CIP 107868 / KCTC 3260 / NRRL B-441) (Lactobacillus paracasei) protein is Uracil-DNA glycosylase.